A 42-amino-acid chain; its full sequence is Thymosin beta-10 (42 aa).

Basic and acidic residues-rich tracts occupy residues 1-25 (MADK…ETQE) and 33-42 (ETIEQEKQAK). A disordered region spans residues 1 to 42 (MADKPDLGEINSFDKAKLKKTETQEKNTLPTKETIEQEKQAK). Ala2 carries the post-translational modification N-acetylalanine. Residue Lys4 is modified to N6-acetyllysine. Ser12 carries the phosphoserine modification. An N6-acetyllysine modification is found at Lys15. Residues Thr21, Thr23, and Thr34 each carry the phosphothreonine modification. Lys39 carries the post-translational modification N6-acetyllysine.

This sequence belongs to the thymosin beta family. Distributed in numerous types of tissues, including thymus, spleen, lung, liver and muscle.

The protein resides in the cytoplasm. It is found in the cytoskeleton. Plays an important role in the organization of the cytoskeleton. Binds to and sequesters actin monomers (G actin) and therefore inhibits actin polymerization. This is Thymosin beta-10 (TMSB10) from Bos taurus (Bovine).